The following is a 439-amino-acid chain: Glucose-6-phosphate 1-dehydrogenase (439 aa).

K100 lines the NADP(+) pocket. Residues H130, K134, E168, and D187 each coordinate substrate. H192 (proton acceptor) is an active-site residue. K288 is a substrate binding site.

This sequence belongs to the glucose-6-phosphate dehydrogenase family.

It catalyses the reaction D-glucose 6-phosphate + NADP(+) = 6-phospho-D-glucono-1,5-lactone + NADPH + H(+). Its pathway is carbohydrate degradation; pentose phosphate pathway; D-ribulose 5-phosphate from D-glucose 6-phosphate (oxidative stage): step 1/3. Functionally, catalyzes the oxidation of glucose 6-phosphate to 6-phosphogluconolactone. In Chlamydia trachomatis serovar D (strain ATCC VR-885 / DSM 19411 / UW-3/Cx), this protein is Glucose-6-phosphate 1-dehydrogenase.